The primary structure comprises 229 residues: Flagellar L-ring protein (229 aa).

The signal sequence occupies residues Met1–Gly25. Cys26 carries the N-palmitoyl cysteine lipid modification. Cys26 carries the S-diacylglycerol cysteine lipid modification.

This sequence belongs to the FlgH family. The basal body constitutes a major portion of the flagellar organelle and consists of four rings (L,P,S, and M) mounted on a central rod.

The protein localises to the cell outer membrane. The protein resides in the bacterial flagellum basal body. Assembles around the rod to form the L-ring and probably protects the motor/basal body from shearing forces during rotation. The chain is Flagellar L-ring protein from Burkholderia vietnamiensis (strain G4 / LMG 22486) (Burkholderia cepacia (strain R1808)).